The primary structure comprises 435 residues: uncharacterized protein (435 aa).

11 helical membrane-spanning segments follow: residues 9–29 (IIVL…ITFA), 57–77 (VGLD…GNIM), 110–130 (TLFG…GGIM), 146–166 (AINV…VLIV), 176–196 (VAAL…ALMT), 226–246 (LPSL…VFTP), 280–300 (VVTS…SWAM), 321–341 (WVIL…MDIT), 343–363 (AILI…IDPV), 367–387 (IIMV…TILF), and 408–428 (FLAL…SLLL).

Belongs to the YiaN/YgiK family.

Its subcellular location is the cell inner membrane. This is an uncharacterized protein from Salmonella typhimurium (strain LT2 / SGSC1412 / ATCC 700720).